We begin with the raw amino-acid sequence, 106 residues long: Large ribosomal subunit protein eL34 (106 aa).

It belongs to the eukaryotic ribosomal protein eL34 family.

The sequence is that of Large ribosomal subunit protein eL34 from Hyperthermus butylicus (strain DSM 5456 / JCM 9403 / PLM1-5).